A 452-amino-acid polypeptide reads, in one-letter code: UPF0210 protein PTH_0987 (452 aa).

The protein belongs to the UPF0210 family. As to quaternary structure, homodimer.

This is UPF0210 protein PTH_0987 from Pelotomaculum thermopropionicum (strain DSM 13744 / JCM 10971 / SI).